The chain runs to 124 residues: Alpha-endosulfine (124 aa).

The residue at position 74 (Ser-74) is a Phosphoserine; by GWL. The interval 99–124 (VTGDHIPTPQDLPQRKNTILTSKLAG) is disordered. Over residues 113 to 124 (RKNTILTSKLAG) the composition is skewed to polar residues.

It belongs to the endosulfine family. Post-translationally, phosphorylation at Ser-74 by gwl during mitosis is essential for interaction with ppp2r2d (PR55-delta) and subsequent inactivation of PP2A.

It is found in the cytoplasm. In terms of biological role, protein phosphatase inhibitor that specifically inhibits protein phosphatase 2A (PP2A) during mitosis. When phosphorylated at Ser-67 during mitosis, specifically interacts with ppp2r2d (PR55-delta) and inhibits its activity, leading to inactivation of PP2A, an essential condition to keep cyclin-B1-CDK1 activity high during M phase. This Danio rerio (Zebrafish) protein is Alpha-endosulfine (ensa).